A 258-amino-acid chain; its full sequence is Small ribosomal subunit protein eS1 (258 aa).

The disordered stretch occupies residues 235 to 258 (VASSGDAGSAVRRDGYEPPVQESV).

Belongs to the eukaryotic ribosomal protein eS1 family. In terms of assembly, component of the small ribosomal subunit. Mature ribosomes consist of a small (40S) and a large (60S) subunit. The 40S subunit contains about 33 different proteins and 1 molecule of RNA (18S). The 60S subunit contains about 49 different proteins and 3 molecules of RNA (28S, 5.8S and 5S).

It is found in the cytoplasm. This Trichoplax adhaerens (Trichoplax reptans) protein is Small ribosomal subunit protein eS1.